Consider the following 622-residue polypeptide: Membrane protein insertase YidC (622 aa).

Residues 6-26 form a helical membrane-spanning segment; the sequence is IVLLIIFSTSLLFLWDAWVKE. A disordered region spans residues 47 to 87; that stretch reads TQSKNNDGLPIPGSELTASQTGSDLNGIPSSGDTADSVTPR. A compositionally biased stretch (polar residues) spans 62–83; the sequence is LTASQTGSDLNGIPSSGDTADS. Transmembrane regions (helical) follow at residues 381–401, 451–471, and 525–545; these read WGIA…PLSA, FPIL…LAAV, and PVAF…YSLV. Residues 563–622 form a disordered region; that stretch reads TAPSQDAPESPASKDAPELPVSNQVINDSENTEAPASGPADSPKKPVNIPRRMHKRTRKK. Residues 583 to 596 show a composition bias toward polar residues; that stretch reads VSNQVINDSENTEA. Positions 613–622 are enriched in basic residues; sequence RRMHKRTRKK.

The protein belongs to the OXA1/ALB3/YidC family. Type 1 subfamily. Interacts with the Sec translocase complex via SecD. Specifically interacts with transmembrane segments of nascent integral membrane proteins during membrane integration.

It is found in the cell inner membrane. Required for the insertion and/or proper folding and/or complex formation of integral membrane proteins into the membrane. Involved in integration of membrane proteins that insert both dependently and independently of the Sec translocase complex, as well as at least some lipoproteins. Aids folding of multispanning membrane proteins. This chain is Membrane protein insertase YidC, found in Nitrosomonas eutropha (strain DSM 101675 / C91 / Nm57).